Reading from the N-terminus, the 185-residue chain is Photosystem I assembly protein Ycf4 (185 aa).

2 helical membrane passes run 24 to 44 (YLIG…SISS) and 66 to 86 (IIMG…WYLV).

The protein belongs to the Ycf4 family.

It localises to the cellular thylakoid membrane. Its function is as follows. Seems to be required for the assembly of the photosystem I complex. This is Photosystem I assembly protein Ycf4 from Prochlorococcus marinus (strain MIT 9515).